The sequence spans 224 residues: TM2 domain-containing protein amaretto (224 aa).

The N-terminal stretch at 1–18 (MRIFYGLLAFLVARQHDA) is a signal peptide. Over 19–154 (QAIQARSDKE…FLRAGVPCVR (136 aa)) the chain is Extracellular. Asn-102 and Asn-142 each carry an N-linked (GlcNAc...) asparagine glycan. The chain crosses the membrane as a helical span at residues 155–175 (YTDHYFVTTLIYSMLLGFLGM). In terms of domain architecture, TM2 spans 157–205 (DHYFVTTLIYSMLLGFLGMDRFCLGQTGTAVGKLLTMGGVGVWWIIDVI). The Cytoplasmic segment spans residues 176–189 (DRFCLGQTGTAVGK). A helical transmembrane segment spans residues 190 to 210 (LLTMGGVGVWWIIDVILLITN). Over 211–224 (NLLPEDGSNWNPYV) the chain is Extracellular.

This sequence belongs to the TM2 family.

It is found in the membrane. In terms of biological role, positive regulator of Notch signaling. Maternal neurogenic factor involved in Notch signaling-dependent neuroectodermal specification during early embryogenesis. Functions cooperatively with amx/TM2D3 and bisc/TM2D1. The protein is TM2 domain-containing protein amaretto of Drosophila melanogaster (Fruit fly).